A 446-amino-acid polypeptide reads, in one-letter code: Tetratricopeptide repeat protein 23 (446 aa).

TPR repeat units lie at residues 45 to 78 (LHLC…TKIC), 137 to 170 (LELF…SKEM), 186 to 219 (SRIK…TETT), and 356 to 389 (AETY…ETFL).

In terms of assembly, associated with the EvC complex composed of EFCAB7, IQCE, EVC2 and EVC.

The protein resides in the cell projection. Its subcellular location is the cilium. Participates positively in the ciliary Hedgehog (Hh) signaling. The chain is Tetratricopeptide repeat protein 23 (Ttc23) from Rattus norvegicus (Rat).